A 25-amino-acid polypeptide reads, in one-letter code: Hemocyanin subunit 3 (25 aa).

This sequence belongs to the tyrosinase family. Hemocyanin subfamily. Hemolymph.

The protein resides in the secreted. It localises to the extracellular space. Functionally, hemocyanins are copper-containing oxygen carriers occurring freely dissolved in the hemolymph of many mollusks and arthropods. The protein is Hemocyanin subunit 3 of Maja squinado (Mediterranean spider crab).